A 1462-amino-acid chain; its full sequence is Gag-Pol polyprotein (1462 aa).

The N-myristoyl glycine; by host moiety is linked to residue Gly2. The interaction with Gp41 stretch occupies residues 7–31 (VLRGKKADELEKIRLRPGGKKKYRL). The Nuclear export signal motif lies at 16 to 22 (LEKIRLR). Residues 26 to 32 (KKKYRLK) carry the Nuclear localization signal motif. The segment at 191-228 (NCVGDHQAAMQIIREIINEEAADWDVQHPIPGPLPAGQ) is interaction with human PPIA/CYPA and NUP153. The segment at 279–364 (YNPTNILDIK…GGPGQKARLM (86 aa)) is dimerization/Multimerization of capsid protein p24. CCHC-type zinc fingers lie at residues 388–405 (IKCW…QCRA) and 409–426 (QGCW…NCPD). The disordered stretch occupies residues 441–507 (APQLPRGPKF…RRDTTQRDDR (67 aa)). Residues 454–468 (NTNSTPNGSSSGPTG) show a composition bias toward low complexity. 2 stretches are compositionally biased toward basic and acidic residues: residues 471-490 (HAAR…RSDR) and 497-507 (ARRDTTQRDDR). The tract at residues 512–516 (PQFSL) is dimerization of protease. The Peptidase A2 domain occupies 531–600 (VEVLLDTGAD…TPINIFGRNI (70 aa)). Asp536 acts as the For protease activity; shared with dimeric partner in catalysis. 2 dimerization of protease regions span residues 560–566 (GIGGFIN) and 599–611 (NILT…LNLP). The 191-residue stretch at 654–844 (EGQLEEAPPT…PPYQWMGYEL (191 aa)) folds into the Reverse transcriptase domain. Mg(2+)-binding residues include Asp720, Asp795, and Asp796. The tract at residues 837–845 (YQWMGYELW) is RT 'primer grip'. Positions 1007–1023 (WEQWWDNYWQVTWIPDW) match the Tryptophan repeat motif motif. In terms of domain architecture, RNase H type-1 spans 1043 to 1166 (IPGAETFYTD…IDHLVSQGIR (124 aa)). Mg(2+) is bound by residues Asp1052, Glu1087, Asp1107, and Asp1158. The segment at 1172 to 1213 (ERIEPAQEEHGKYHSNVKELAHKFGLPNLVARQIVNTCAQCQ) adopts an Integrase-type zinc-finger fold. Zn(2+) contacts are provided by His1181, His1185, Cys1209, and Cys1212. The Integrase catalytic domain maps to 1222 to 1373 (QVNAELGTWQ…TPVERLVNMI (152 aa)). Asp1233, Asp1285, and Glu1321 together coordinate Mg(2+). A DNA-binding region (integrase-type) is located at residues 1392–1439 (FRVYFREGRNQLWQGPGELLWKGDGAVIVKVGTDIKVIPRRKAKIIRD). Residues 1443-1462 (RQEMDSGSHLEGAREDGEMA) are disordered.

Homotrimer; further assembles as hexamers of trimers. Interacts with gp41 (via C-terminus). Interacts with host CALM1; this interaction induces a conformational change in the Matrix protein, triggering exposure of the myristate group. Interacts with host AP3D1; this interaction allows the polyprotein trafficking to multivesicular bodies during virus assembly. Part of the pre-integration complex (PIC) which is composed of viral genome, matrix protein, Vpr and integrase. As to quaternary structure, homodimer; the homodimer further multimerizes as homohexamers or homopentamers. Interacts with human PPIA/CYPA. Interacts with human NUP153. Interacts with host PDZD8; this interaction stabilizes the capsid. Interacts with monkey TRIM5; this interaction destabilizes the capsid. In terms of assembly, homodimer, whose active site consists of two apposed aspartic acid residues. Heterodimer of p66 RT and p51 RT (RT p66/p51). Heterodimerization of RT is essential for DNA polymerase activity. The overall folding of the subdomains is similar in p66 RT and p51 RT but the spatial arrangements of the subdomains are dramatically different. As to quaternary structure, homotetramer; may further associate as a homohexadecamer. Part of the pre-integration complex (PIC) which is composed of viral genome, matrix protein, Vpr and integrase. Interacts with human SMARCB1/INI1 and human PSIP1/LEDGF isoform 1. Interacts with human KPNA3; this interaction might play a role in nuclear import of the pre-integration complex. Interacts with human NUP153; this interaction might play a role in nuclear import of the pre-integration complex. Mg(2+) serves as cofactor. Specific enzymatic cleavages by the viral protease yield mature proteins. The protease is released by autocatalytic cleavage. The polyprotein is cleaved during and after budding, this process is termed maturation. Proteolytic cleavage of p66 RT removes the RNase H domain to yield the p51 RT subunit. Nucleocapsid protein p7 might be further cleaved after virus entry.

The protein resides in the host cell membrane. The protein localises to the host endosome. It is found in the host multivesicular body. Its subcellular location is the virion membrane. It localises to the host nucleus. The protein resides in the host cytoplasm. The protein localises to the virion. The enzyme catalyses Endopeptidase for which the P1 residue is preferably hydrophobic.. The catalysed reaction is Endohydrolysis of RNA in RNA/DNA hybrids. Three different cleavage modes: 1. sequence-specific internal cleavage of RNA. Human immunodeficiency virus type 1 and Moloney murine leukemia virus enzymes prefer to cleave the RNA strand one nucleotide away from the RNA-DNA junction. 2. RNA 5'-end directed cleavage 13-19 nucleotides from the RNA end. 3. DNA 3'-end directed cleavage 15-20 nucleotides away from the primer terminus.. It catalyses the reaction 3'-end directed exonucleolytic cleavage of viral RNA-DNA hybrid.. It carries out the reaction DNA(n) + a 2'-deoxyribonucleoside 5'-triphosphate = DNA(n+1) + diphosphate. With respect to regulation, protease: The viral protease is inhibited by many synthetic protease inhibitors (PIs), such as amprenavir, atazanavir, indinavir, loprinavir, nelfinavir, ritonavir and saquinavir. Use of protease inhibitors in tritherapy regimens permit more ambitious therapeutic strategies. Reverse transcriptase/ribonuclease H: RT can be inhibited either by nucleoside RT inhibitors (NRTIs) or by non nucleoside RT inhibitors (NNRTIs). NRTIs act as chain terminators, whereas NNRTIs inhibit DNA polymerization by binding a small hydrophobic pocket near the RT active site and inducing an allosteric change in this region. Classical NRTIs are abacavir, adefovir (PMEA), didanosine (ddI), lamivudine (3TC), stavudine (d4T), tenofovir (PMPA), zalcitabine (ddC), and zidovudine (AZT). Classical NNRTIs are atevirdine (BHAP U-87201E), delavirdine, efavirenz (DMP-266), emivirine (I-EBU), and nevirapine (BI-RG-587). The tritherapies used as a basic effective treatment of AIDS associate two NRTIs and one NNRTI. Functionally, mediates, with Gag polyprotein, the essential events in virion assembly, including binding the plasma membrane, making the protein-protein interactions necessary to create spherical particles, recruiting the viral Env proteins, and packaging the genomic RNA via direct interactions with the RNA packaging sequence (Psi). Gag-Pol polyprotein may regulate its own translation, by the binding genomic RNA in the 5'-UTR. At low concentration, the polyprotein would promote translation, whereas at high concentration, the polyprotein would encapsidate genomic RNA and then shut off translation. Its function is as follows. Targets the polyprotein to the plasma membrane via a multipartite membrane-binding signal, that includes its myristoylated N-terminus. Matrix protein is part of the pre-integration complex. Implicated in the release from host cell mediated by Vpu. Binds to RNA. In terms of biological role, forms the conical core that encapsulates the genomic RNA-nucleocapsid complex in the virion. Most core are conical, with only 7% tubular. The core is constituted by capsid protein hexamer subunits. The core is disassembled soon after virion entry. Host restriction factors such as TRIM5-alpha or TRIMCyp bind retroviral capsids and cause premature capsid disassembly, leading to blocks in reverse transcription. Capsid restriction by TRIM5 is one of the factors which restricts HIV-1 to the human species. Host PIN1 apparently facilitates the virion uncoating. On the other hand, interactions with PDZD8 or CYPA stabilize the capsid. Encapsulates and protects viral dimeric unspliced genomic RNA (gRNA). Binds these RNAs through its zinc fingers. Acts as a nucleic acid chaperone which is involved in rearangement of nucleic acid secondary structure during gRNA retrotranscription. Also facilitates template switch leading to recombination. As part of the polyprotein, participates in gRNA dimerization, packaging, tRNA incorporation and virion assembly. Functionally, aspartyl protease that mediates proteolytic cleavages of Gag and Gag-Pol polyproteins during or shortly after the release of the virion from the plasma membrane. Cleavages take place as an ordered, step-wise cascade to yield mature proteins. This process is called maturation. Displays maximal activity during the budding process just prior to particle release from the cell. Also cleaves Nef and Vif, probably concomitantly with viral structural proteins on maturation of virus particles. Hydrolyzes host EIF4GI and PABP1 in order to shut off the capped cellular mRNA translation. The resulting inhibition of cellular protein synthesis serves to ensure maximal viral gene expression and to evade host immune response. Its function is as follows. Multifunctional enzyme that converts the viral RNA genome into dsDNA in the cytoplasm, shortly after virus entry into the cell. This enzyme displays a DNA polymerase activity that can copy either DNA or RNA templates, and a ribonuclease H (RNase H) activity that cleaves the RNA strand of RNA-DNA heteroduplexes in a partially processive 3' to 5' endonucleasic mode. Conversion of viral genomic RNA into dsDNA requires many steps. A tRNA(3)-Lys binds to the primer-binding site (PBS) situated at the 5'-end of the viral RNA. RT uses the 3' end of the tRNA primer to perform a short round of RNA-dependent minus-strand DNA synthesis. The reading proceeds through the U5 region and ends after the repeated (R) region which is present at both ends of viral RNA. The portion of the RNA-DNA heteroduplex is digested by the RNase H, resulting in a ssDNA product attached to the tRNA primer. This ssDNA/tRNA hybridizes with the identical R region situated at the 3' end of viral RNA. This template exchange, known as minus-strand DNA strong stop transfer, can be either intra- or intermolecular. RT uses the 3' end of this newly synthesized short ssDNA to perform the RNA-dependent minus-strand DNA synthesis of the whole template. RNase H digests the RNA template except for two polypurine tracts (PPTs) situated at the 5'-end and near the center of the genome. It is not clear if both polymerase and RNase H activities are simultaneous. RNase H probably can proceed both in a polymerase-dependent (RNA cut into small fragments by the same RT performing DNA synthesis) and a polymerase-independent mode (cleavage of remaining RNA fragments by free RTs). Secondly, RT performs DNA-directed plus-strand DNA synthesis using the PPTs that have not been removed by RNase H as primers. PPTs and tRNA primers are then removed by RNase H. The 3' and 5' ssDNA PBS regions hybridize to form a circular dsDNA intermediate. Strand displacement synthesis by RT to the PBS and PPT ends produces a blunt ended, linear dsDNA copy of the viral genome that includes long terminal repeats (LTRs) at both ends. In terms of biological role, catalyzes viral DNA integration into the host chromosome, by performing a series of DNA cutting and joining reactions. This enzyme activity takes place after virion entry into a cell and reverse transcription of the RNA genome in dsDNA. The first step in the integration process is 3' processing. This step requires a complex comprising the viral genome, matrix protein, Vpr and integrase. This complex is called the pre-integration complex (PIC). The integrase protein removes 2 nucleotides from each 3' end of the viral DNA, leaving recessed CA OH's at the 3' ends. In the second step, the PIC enters cell nucleus. This process is mediated through integrase and Vpr proteins, and allows the virus to infect a non dividing cell. This ability to enter the nucleus is specific of lentiviruses, other retroviruses cannot and rely on cell division to access cell chromosomes. In the third step, termed strand transfer, the integrase protein joins the previously processed 3' ends to the 5' ends of strands of target cellular DNA at the site of integration. The 5'-ends are produced by integrase-catalyzed staggered cuts, 5 bp apart. A Y-shaped, gapped, recombination intermediate results, with the 5'-ends of the viral DNA strands and the 3' ends of target DNA strands remaining unjoined, flanking a gap of 5 bp. The last step is viral DNA integration into host chromosome. This involves host DNA repair synthesis in which the 5 bp gaps between the unjoined strands are filled in and then ligated. Since this process occurs at both cuts flanking the HIV genome, a 5 bp duplication of host DNA is produced at the ends of HIV-1 integration. Alternatively, Integrase may catalyze the excision of viral DNA just after strand transfer, this is termed disintegration. The chain is Gag-Pol polyprotein (gag-pol) from Human immunodeficiency virus type 2 subtype A (isolate SBLISY) (HIV-2).